The chain runs to 176 residues: Large ribosomal subunit protein bL28m (176 aa).

A mitochondrion-targeting transit peptide spans 1–8; the sequence is MASKLLRK.

The protein belongs to the bacterial ribosomal protein bL28 family. As to quaternary structure, component of the mitochondrial large ribosomal subunit (mt-LSU). Mature yeast 74S mitochondrial ribosomes consist of a small (37S) and a large (54S) subunit. The 37S small subunit contains a 15S ribosomal RNA (15S mt-rRNA) and at least 32 different proteins. The 54S large subunit contains a 21S rRNA (21S mt-rRNA) and at least 45 different proteins.

It localises to the cytoplasm. Its subcellular location is the mitochondrion. Functionally, component of the mitochondrial ribosome (mitoribosome), a dedicated translation machinery responsible for the synthesis of mitochondrial genome-encoded proteins, including at least some of the essential transmembrane subunits of the mitochondrial respiratory chain. The mitoribosomes are attached to the mitochondrial inner membrane and translation products are cotranslationally integrated into the membrane. In Schizosaccharomyces pombe (strain 972 / ATCC 24843) (Fission yeast), this protein is Large ribosomal subunit protein bL28m (mrpl24).